Here is a 66-residue protein sequence, read N- to C-terminus: Small ribosomal subunit protein eS27 (66 aa).

Zn(2+) is bound by residues cysteine 21, cysteine 24, cysteine 40, and cysteine 43. The C4-type zinc finger occupies 21 to 43; it reads CRQCNNEQVIFSNATFPVRCLSC.

The protein belongs to the eukaryotic ribosomal protein eS27 family. As to quaternary structure, part of the 30S ribosomal subunit. It depends on Zn(2+) as a cofactor.

The sequence is that of Small ribosomal subunit protein eS27 from Sulfolobus acidocaldarius (strain ATCC 33909 / DSM 639 / JCM 8929 / NBRC 15157 / NCIMB 11770).